Consider the following 101-residue polypeptide: Eukaryotic translation initiation factor 4E-binding protein 3 (101 aa).

A disordered region spans residues 1–28 (MSSSTSCPIPGCRDQLPDGYSTTPGGTL). The YXXXXLphi motif motif lies at 40 to 46 (YDRKFLL). The short motif at 97–101 (FEMDM) is the TOS motif element.

It belongs to the eIF4E-binding protein family. As to quaternary structure, interacts with EIF4E. Interacts with RPA2 (via N-terminus); the interaction enhances EIF4EBP3-mediated inhibition of EIF4E-mediated mRNA nuclear export. Post-translationally, phosphorylated.

It is found in the cytoplasm. It localises to the nucleus. Repressor of translation initiation that regulates EIF4E activity by preventing its assembly into the eIF4F complex: the hypophosphorylated form competes with EIF4G1/EIF4G3 and strongly binds to EIF4E, leading to repression of translation. In contrast, the hyperphosphorylated form dissociates from EIF4E, allowing interaction between EIF4G1/EIF4G3 and EIF4E, leading to initiation of translation. Inhibits EIF4E-mediated mRNA nuclear export. This Mus musculus (Mouse) protein is Eukaryotic translation initiation factor 4E-binding protein 3 (Eif4ebp3).